The chain runs to 170 residues: MAPKKAKRRAAAEGGSSNVFSMFDQTQIQEFKEAFTVIDQNRDGIIDKEDLRDTFAAMGRLNVKNEELDAMMKEASGPINFTVFLTMFGEKLKGADPEDVITGAFKVLDPEGKGTIKKQFLEELLITQCDRFSQEEIKNMWAAFSPDVGGNVDYKNICYVITHGDAKDQE.

A2 carries the post-translational modification N,N,N-trimethylalanine. Residues S16 and S17 each carry the phosphoserine modification. Phosphothreonine is present on residues T26 and T36. In terms of domain architecture, EF-hand 1 spans T26–L61. Residues D39, N41, D43, and D50 each coordinate Ca(2+). S76 bears the Phosphoserine mark. 2 consecutive EF-hand domains span residues D96–R131 and F132–K167. T102 is subject to Phosphothreonine.

In terms of assembly, myosin is a hexamer of 2 heavy chains and 4 light chains.

This is Myosin regulatory light chain 2, skeletal muscle isoform type 1 from Oryctolagus cuniculus (Rabbit).